Consider the following 1025-residue polypeptide: Collagen alpha-1(VI) chain (1025 aa).

An N-terminal signal peptide occupies residues 1 to 19 (MRLAHALLPLLLQACWVAT). The N-terminal globular domain stretch occupies residues 20–255 (QDIQGSKAIA…CCSFECQAAR (236 aa)). Residues 36 to 234 (DLFFVLDTSE…EVISQTIDTI (199 aa)) enclose the VWFA 1 domain. Asn211 carries an N-linked (GlcNAc...) asparagine glycan. A disordered region spans residues 252 to 588 (QAARGPPGPR…QGPPGHVGPP (337 aa)). A triple-helical region region spans residues 256–591 (GPPGPRGDPG…PGHVGPPGPD (336 aa)). Residues 261 to 263 (RGD) carry the Cell attachment site motif. Composition is skewed to basic and acidic residues over residues 267-284 (EGER…EAGD) and 300-333 (KGEK…DGMK). 2 consecutive short sequence motifs (cell attachment site) follow at residues 441–443 (RGD) and 477–479 (RGD). 2 N-linked (GlcNAc...) asparagine glycosylation sites follow: Asn515 and Asn536. A compositionally biased stretch (acidic residues) spans 549-559 (GEVGDPGEDNN). Over residues 578–588 (PQGPPGHVGPP) the composition is skewed to pro residues. The segment at 592-1025 (ECEILDIIMK…QTVSRKVALG (434 aa)) is C-terminal globular domain. 2 consecutive VWFA domains span residues 614-802 (DILF…LKNI) and 826-1018 (DITI…YQTV). 2 N-linked (GlcNAc...) asparagine glycosylation sites follow: Asn801 and Asn893.

Belongs to the type VI collagen family. In terms of assembly, trimers composed of three different chains: alpha-1(VI), alpha-2(VI), and alpha-3(VI) or alpha-4(VI) or alpha-5(VI) or alpha-6(VI). In terms of processing, prolines at the third position of the tripeptide repeating unit (G-X-Y) are hydroxylated in some or all of the chains.

It is found in the secreted. The protein resides in the extracellular space. Its subcellular location is the extracellular matrix. Functionally, collagen VI acts as a cell-binding protein. This Mus musculus (Mouse) protein is Collagen alpha-1(VI) chain (Col6a1).